The following is a 268-amino-acid chain: MLFDLFKALVLGIVEGVTEFLPVSSTGHILLAERIFDLDQDNFWKTFAVLIQLGAILAILAIYFQRLWRVATHMFTDPAARRFVIGVLVAFLPAVILGLIFGTFIKEVLFNPWVVCFSLIAGGAVLLWVDQQDVNPRHHDAMAFPLPMYLGIGIAQCAAMVPGVSRSGASIVAAMLFGADKRAAAEFSFFLAIPTMLGAFVYDVYKSRGDMTMDHAFIIIVGFVVSFITAIVVVKTFLDFVTKNGFTFFAWWRVIVGTLGLIALALGA.

7 helical membrane passes run 43–63 (FWKT…LAIY), 85–105 (IGVL…GTFI), 108–128 (VLFN…VLLW), 141–161 (AMAF…AAMV), 184–204 (AAEF…VYDV), 217–237 (FIII…VKTF), and 246–266 (FTFF…ALAL).

Belongs to the UppP family.

Its subcellular location is the cell inner membrane. It catalyses the reaction di-trans,octa-cis-undecaprenyl diphosphate + H2O = di-trans,octa-cis-undecaprenyl phosphate + phosphate + H(+). Functionally, catalyzes the dephosphorylation of undecaprenyl diphosphate (UPP). Confers resistance to bacitracin. This chain is Undecaprenyl-diphosphatase, found in Afipia carboxidovorans (strain ATCC 49405 / DSM 1227 / KCTC 32145 / OM5) (Oligotropha carboxidovorans).